A 155-amino-acid chain; its full sequence is Small ribosomal subunit protein uS7cz/uS7cy (155 aa).

It belongs to the universal ribosomal protein uS7 family. In terms of assembly, part of the 30S ribosomal subunit.

It localises to the plastid. It is found in the chloroplast. Its function is as follows. One of the primary rRNA binding proteins, it binds directly to 16S rRNA where it nucleates assembly of the head domain of the 30S subunit. The sequence is that of Small ribosomal subunit protein uS7cz/uS7cy (rps7-A) from Pelargonium hortorum (Common geranium).